Here is a 164-residue protein sequence, read N- to C-terminus: UPF0251 protein MM_1448 (164 aa).

Residues 91–100 show a composition bias toward basic and acidic residues; that stretch reads GDYRMPRGDR. Positions 91 to 123 are disordered; the sequence is GDYRMPRGDRTGPAGQGPAGGGRGRGQGKGRGG. The span at 104 to 115 shows a compositional bias: gly residues; the sequence is AGQGPAGGGRGR.

It belongs to the UPF0251 family.

In Methanosarcina mazei (strain ATCC BAA-159 / DSM 3647 / Goe1 / Go1 / JCM 11833 / OCM 88) (Methanosarcina frisia), this protein is UPF0251 protein MM_1448.